Consider the following 374-residue polypeptide: Peptide chain release factor 2 (374 aa).

Gln249 carries the N5-methylglutamine modification.

It belongs to the prokaryotic/mitochondrial release factor family. Methylated by PrmC. Methylation increases the termination efficiency of RF2.

It is found in the cytoplasm. In terms of biological role, peptide chain release factor 2 directs the termination of translation in response to the peptide chain termination codons UGA and UAA. This Ruegeria sp. (strain TM1040) (Silicibacter sp.) protein is Peptide chain release factor 2.